Consider the following 867-residue polypeptide: Respiratory burst oxidase homolog protein B (867 aa).

Residues Met1–Arg13 show a composition bias toward basic and acidic residues. Residues Met1 to Ser20 are disordered. The Cytoplasmic portion of the chain corresponds to Met1–Arg322. A phosphoserine; by CPK mark is found at Ser82 and Ser97. 2 EF-hand-like regions span residues Ala141 to Ser149 and Arg175 to Glu186. EF-hand domains are found at residues Ser198–Ala233 and Asn242–His277. Positions 211, 213, 215, 217, and 222 each coordinate Ca(2+). Residues Ile323–Gln343 form a helical membrane-spanning segment. Topologically, residues Tyr344–Ser358 are extracellular. The chain crosses the membrane as a helical span at residues Val359–Cys379. The 159-residue stretch at Lys361–Ile519 folds into the Ferric oxidoreductase domain. Topologically, residues Arg380–Val407 are cytoplasmic. Residues Ile408–Phe428 form a helical membrane-spanning segment. Topologically, residues Pro429–Gly463 are extracellular. Residues Trp464–Phe484 traverse the membrane as a helical segment. The Cytoplasmic portion of the chain corresponds to Arg485–Tyr506. A helical membrane pass occupies residues Ser507 to Leu527. Over Ser528–Asp686 the chain is Extracellular. Residues Ser558–Asp681 form the FAD-binding FR-type domain. Residues Val687 to Val707 traverse the membrane as a helical segment. The Cytoplasmic segment spans residues Leu708–Phe867.

This sequence belongs to the RBOH (TC 5.B.1.3) family. In terms of assembly, monomer and homodimer. Phosphorylation at Ser-82 and Ser-97 is required for full activity of RBOHB. Not phosphorylated at Ser-89. Phosphorylation at Ser-82 is induced by fungal elicitor treatment.

The protein localises to the cell membrane. Inhibited by diphenylene iodinium (DPI). In terms of biological role, calcium-dependent NADPH oxidase that generates superoxide. Involved in the massive phase II oxidative burst induced by pathogen infection. This chain is Respiratory burst oxidase homolog protein B (RBOHB), found in Solanum tuberosum (Potato).